Here is a 598-residue protein sequence, read N- to C-terminus: Aspartate--tRNA ligase (598 aa).

Glutamate 175 is an L-aspartate binding site. The tract at residues 199 to 202 (QLFK) is aspartate. Position 221 (arginine 221) interacts with L-aspartate. ATP contacts are provided by residues 221–223 (RDE) and glutamine 230. Histidine 450 lines the L-aspartate pocket. Residue glutamate 486 participates in ATP binding. Residue arginine 493 participates in L-aspartate binding. 538–541 (GLDR) contributes to the ATP binding site.

It belongs to the class-II aminoacyl-tRNA synthetase family. Type 1 subfamily. In terms of assembly, homodimer.

The protein localises to the cytoplasm. The enzyme catalyses tRNA(Asp) + L-aspartate + ATP = L-aspartyl-tRNA(Asp) + AMP + diphosphate. In terms of biological role, catalyzes the attachment of L-aspartate to tRNA(Asp) in a two-step reaction: L-aspartate is first activated by ATP to form Asp-AMP and then transferred to the acceptor end of tRNA(Asp). The polypeptide is Aspartate--tRNA ligase (Lactiplantibacillus plantarum (strain ATCC BAA-793 / NCIMB 8826 / WCFS1) (Lactobacillus plantarum)).